Consider the following 441-residue polypeptide: Endothelin receptor type B (441 aa).

The N-terminal stretch at 1–26 (MQPLPSLCGRALVALILACGVAGIQA) is a signal peptide. The Extracellular segment spans residues 27-100 (EEREFPPAGA…GPIEIKETFK (74 aa)). Residues 30-87 (EFPPAGATQPLPGTGEMMETPTETSWPGRSNASDPRSSATPQIPRGGRMAGIPPRTPP) are disordered. Positions 41–53 (PGTGEMMETPTET) are enriched in low complexity. The span at 54–70 (SWPGRSNASDPRSSATP) shows a compositional bias: polar residues. A helical membrane pass occupies residues 101-125 (YINTVVSCLVFVLGIIGNSTLLRII). The Cytoplasmic portion of the chain corresponds to 126–136 (YKNKCMRNGPN). Residues 137–162 (ILIASLALGDLLHIIIDIPINTYKLL) form a helical membrane-spanning segment. Topologically, residues 163–174 (AKDWPFGVEMCK) are extracellular. Cys173 and Cys254 are joined by a disulfide. The helical transmembrane segment at 175-196 (LVPFIQKASVGITVLSLCALSI) threads the bilayer. Over 197–217 (DRYRAVASWSRIKGIGVPKWT) the chain is Cytoplasmic. The helical transmembrane segment at 218-242 (AVEIVLIWVVSVVLAVPEAVGFDII) threads the bilayer. Residues 243-270 (TSDHIGNKLRICLLHPTQKTAFMQFYKT) are Extracellular-facing. The helical transmembrane segment at 271–295 (AKDWWLFSFYFCLPLAITALFYTLM) threads the bilayer. Residues 296–323 (TCEMLRKKSGMQIALNDHLKQRREVAKT) lie on the Cytoplasmic side of the membrane. Residue Ser304 is modified to Phosphoserine. A helical membrane pass occupies residues 324–349 (VFCLVLVFALCWLPLHLSRILKLTLY). The Extracellular portion of the chain corresponds to 350–361 (DQHDPRRCEFLS). The helical transmembrane segment at 362–388 (FLLVLDYIGINMASLNSCINPIALYLV) threads the bilayer. Over 389-441 (SKRFKNCFKSCLCCWCQSFEEKQSLEEKQSCLKFKANDHGYDNFRSSNKYSSS) the chain is Cytoplasmic. Residues Cys402 and Cys404 are each lipidated (S-palmitoyl cysteine). Residues Ser418, Ser434, and Ser435 each carry the phosphoserine modification. Residue Tyr438 is modified to Phosphotyrosine. Phosphoserine is present on residues Ser439, Ser440, and Ser441.

The protein belongs to the G-protein coupled receptor 1 family. Endothelin receptor subfamily. EDNRB sub-subfamily. Post-translationally, it is not sure whether phosphorylation is on Ser-434 or Ser-435.

Its subcellular location is the cell membrane. Non-specific receptor for endothelin 1, 2, and 3. Mediates its action by association with G proteins that activate a phosphatidylinositol-calcium second messenger system. The polypeptide is Endothelin receptor type B (EDNRB) (Bos taurus (Bovine)).